Consider the following 511-residue polypeptide: Potassium voltage-gated channel subfamily A member 10 (511 aa).

Residues 22 to 50 are disordered; that stretch reads IQEEPGYATDFDSTSPKGRPGGSSFSNGK. The chain crosses the membrane as a helical span at residues 218–238; it reads VAVVSVLVVVISITIFCLETL. Asn256 is a glycosylation site (N-linked (GlcNAc...) asparagine). The helical transmembrane segment at 271–292 threads the bilayer; the sequence is FFMVESTCIVWFTFELVLRFVV. Cys293 carries S-palmitoyl cysteine lipidation. The helical transmembrane segment at 303–323 threads the bilayer; the sequence is IMNIIDIISIIPYFATLITEL. The N-linked (GlcNAc...) asparagine glycan is linked to Asn334. The chain crosses the membrane as a helical; Voltage-sensor span at residues 339–358; it reads ILRIIRLVRVFRIFKLSRHS. Residues 375 to 395 traverse the membrane as a helical segment; sequence LGLLIFFLFIGVILFSSAVYF. Residues 421–426 carry the Selectivity filter motif; the sequence is TVGYGD. Residues 436 to 456 form a helical membrane-spanning segment; it reads IVGTLCAIAGVLTIALPVPVI. The segment at 489 to 511 is disordered; sequence SRMGSTDSLNKTNGGCSTEKSRK. The N-linked (GlcNAc...) asparagine glycan is linked to Asn498.

This sequence belongs to the potassium channel family. A (Shaker) (TC 1.A.1.2) subfamily. Kv1.8/KCNA10 sub-subfamily. Homotetramer. Interacts with KCN4B/POMP. Interaction with KCN4B/POMP is necessary for the modulation of channel activity by cAMP. As to expression, detected in kidney, in proximal tubules, glomerular endothelium, in vascular endothelium and in smooth muscle cells.

It localises to the membrane. It carries out the reaction K(+)(in) = K(+)(out). The channel activity is up-regulated by cAMP. Functionally, voltage-gated potassium ion channel that mediates K(+) permeability of excitable membranes. When opened in response to the voltage difference across the membrane, KCNA10 channel selectively allows the flow of potassium ions across the membrane down their electrochemical gradient. The protein is Potassium voltage-gated channel subfamily A member 10 of Homo sapiens (Human).